Reading from the N-terminus, the 479-residue chain is Ribulose bisphosphate carboxylase large chain (479 aa).

Positions 1-2 are excised as a propeptide; that stretch reads MS. Proline 3 carries the post-translational modification N-acetylproline. Residues asparagine 123 and threonine 173 each coordinate substrate. Catalysis depends on lysine 175, which acts as the Proton acceptor. Substrate is bound at residue lysine 177. Residues lysine 201, aspartate 203, and glutamate 204 each contribute to the Mg(2+) site. N6-carboxylysine is present on lysine 201. Catalysis depends on histidine 294, which acts as the Proton acceptor. The substrate site is built by arginine 295, histidine 327, and serine 379.

Belongs to the RuBisCO large chain family. Type I subfamily. As to quaternary structure, heterohexadecamer of 8 large chains and 8 small chains; disulfide-linked. The disulfide link is formed within the large subunit homodimers. Requires Mg(2+) as cofactor. In terms of processing, the disulfide bond which can form in the large chain dimeric partners within the hexadecamer appears to be associated with oxidative stress and protein turnover.

It localises to the plastid. Its subcellular location is the chloroplast. The enzyme catalyses 2 (2R)-3-phosphoglycerate + 2 H(+) = D-ribulose 1,5-bisphosphate + CO2 + H2O. It carries out the reaction D-ribulose 1,5-bisphosphate + O2 = 2-phosphoglycolate + (2R)-3-phosphoglycerate + 2 H(+). Functionally, ruBisCO catalyzes two reactions: the carboxylation of D-ribulose 1,5-bisphosphate, the primary event in carbon dioxide fixation, as well as the oxidative fragmentation of the pentose substrate in the photorespiration process. Both reactions occur simultaneously and in competition at the same active site. The chain is Ribulose bisphosphate carboxylase large chain from Hordeum vulgare (Barley).